The sequence spans 409 residues: MARAKFERNKPHVNIGTIGHVDHGKTTLTAAITMTLAALGRAKAKKYDEIDQAPEEKARGITINTAHVEYETEKRHYAHVDCPGHADYVKNMITGAAQMDGAILVVSAADGPMPQTREHILLARQVGVPNIVVFLNKKDQLDDPELLELVELEVRELLSKYDFPGDDVPIVAGSALMALEKMASEPKLIRGKDDWVDCIYSLMDAVDAYIPTPERAIDKPFLMAVEDVFSITGRGTVATGRIERGKVKVGETIELVGIRGTRSTTVTGLEMFQKSLDEGLAGDNIGVLLRGIKKEDVERGMVLAKPGSITPHTQFEGEVYILSKEEGGRHTPFFAGYRPQFYVRTTDVTGTIVTFTDDEGKSAEMVMPGDRIKMTVELINPIAIEDGMRFAIREGGRTVGAGVVSKILK.

The 205-residue stretch at 10-214 folds into the tr-type G domain; the sequence is KPHVNIGTIG…AVDAYIPTPE (205 aa). A G1 region spans residues 19 to 26; the sequence is GHVDHGKT. Residue 19–26 participates in GTP binding; it reads GHVDHGKT. A Mg(2+)-binding site is contributed by Thr26. A G2 region spans residues 60–64; sequence GITIN. The G3 stretch occupies residues 81–84; it reads DCPG. GTP is bound by residues 81–85 and 136–139; these read DCPGH and NKKD. The interval 136–139 is G4; the sequence is NKKD. The segment at 174–176 is G5; sequence SAL.

Belongs to the TRAFAC class translation factor GTPase superfamily. Classic translation factor GTPase family. EF-Tu/EF-1A subfamily. In terms of assembly, monomer.

The protein resides in the cytoplasm. It catalyses the reaction GTP + H2O = GDP + phosphate + H(+). Functionally, GTP hydrolase that promotes the GTP-dependent binding of aminoacyl-tRNA to the A-site of ribosomes during protein biosynthesis. The polypeptide is Elongation factor Tu (Gloeobacter violaceus (strain ATCC 29082 / PCC 7421)).